A 66-amino-acid chain; its full sequence is Large ribosomal subunit protein bL35 (66 aa).

Residues 22-41 are disordered; that stretch reads VMSAQRGKRHGMIKRTKKQI. Residues 27-41 are compositionally biased toward basic residues; it reads RGKRHGMIKRTKKQI.

This sequence belongs to the bacterial ribosomal protein bL35 family.

This is Large ribosomal subunit protein bL35 from Rhodopseudomonas palustris (strain TIE-1).